Here is an 812-residue protein sequence, read N- to C-terminus: Phenylalanine--tRNA ligase beta subunit (812 aa).

Positions 39-155 (SKTFAPFTIA…ADAPVGAGYA (117 aa)) constitute a tRNA-binding domain. Residues 405 to 480 (PEDRVIDFPL…RIVGVDKVPM (76 aa)) enclose the B5 domain. Residues aspartate 458, aspartate 464, glutamate 467, and glutamate 468 each contribute to the Mg(2+) site. The FDX-ACB domain maps to 718–811 (PAFQPVSRDF…VAKRTGGSLR (94 aa)).

It belongs to the phenylalanyl-tRNA synthetase beta subunit family. Type 1 subfamily. Tetramer of two alpha and two beta subunits. The cofactor is Mg(2+).

It localises to the cytoplasm. It carries out the reaction tRNA(Phe) + L-phenylalanine + ATP = L-phenylalanyl-tRNA(Phe) + AMP + diphosphate + H(+). The polypeptide is Phenylalanine--tRNA ligase beta subunit (Nitrobacter winogradskyi (strain ATCC 25391 / DSM 10237 / CIP 104748 / NCIMB 11846 / Nb-255)).